Here is a 92-residue protein sequence, read N- to C-terminus: Transcription factor PRE1 (92 aa).

The bHLH domain maps to 4-59 (RRSRQSSSAPRISDNQMIDLVSKLRQILPEIGQRRRSDKASASKVLQETCNYIRNL).

As to quaternary structure, interacts with IBH1 and HFR1. In terms of tissue distribution, expressed in roots, leaves, stems and flowers.

It localises to the nucleus. Functionally, atypical and probable non DNA-binding bHLH transcription factor that integrates multiple signaling pathways to regulate cell elongation and plant development. Binds IBH1, forming a pair of antagonistic bHLH transcription factors that function downstream of BZR1 to mediate brassinosteroid regulation of cell elongation. Regulates light responses by binding and inhibiting the activity of the bHLH transcription factor HFR1, a critical regulator of light signaling and shade avoidance. May have a regulatory role in various aspects of gibberellin-dependent growth and development. The polypeptide is Transcription factor PRE1 (PRE1) (Arabidopsis thaliana (Mouse-ear cress)).